We begin with the raw amino-acid sequence, 427 residues long: Trigger factor (427 aa).

The PPIase FKBP-type domain occupies 163–248; sequence GNIAIIDFKG…VKGIKAKELP (86 aa).

Belongs to the FKBP-type PPIase family. Tig subfamily.

Its subcellular location is the cytoplasm. It catalyses the reaction [protein]-peptidylproline (omega=180) = [protein]-peptidylproline (omega=0). Involved in protein export. Acts as a chaperone by maintaining the newly synthesized protein in an open conformation. Functions as a peptidyl-prolyl cis-trans isomerase. The chain is Trigger factor from Clostridium botulinum (strain Eklund 17B / Type B).